The sequence spans 112 residues: Putative movement protein (112 aa).

Residues 27-47 traverse the membrane as a helical segment; sequence IGIIMLCIVGIVVLWVLIILC. Residues 77–112 form a disordered region; it reads TGTPFEETGPHRERRWAERRTEATNQNNNDNVNRFS. Over residues 84–98 the composition is skewed to basic and acidic residues; that stretch reads TGPHRERRWAERRTE. The span at 101-112 shows a compositional bias: polar residues; that stretch reads NQNNNDNVNRFS.

The protein belongs to the nanovirus movement protein family.

The protein localises to the host cell membrane. In terms of biological role, may transport viral genome to neighboring plant cells directly through plasmosdesmata, without any budding. The movement protein allows efficient cell to cell propagation, by bypassing the host cell wall barrier. This is Putative movement protein (DNA-M) from Subterranean clover stunt virus (strain F) (SCSV).